Reading from the N-terminus, the 253-residue chain is uncharacterized protein (253 aa).

2 EamA domains span residues 1-97 (MFFM…IYSL) and 116-237 (FFWA…ISRL). Transmembrane regions (helical) follow at residues 2–22 (FFMALRFLIGGIILLPFAKQL), 28–48 (IFLLSIFTTLSTSFWAYGLLY), 53–73 (ESAVLSYTMPLIAIPLSTLIL), 80–100 (TEVIGILIGFSGVVIYSLNLG), 101–121 (IYFSLIGIVLTLINAFFWALF), 138–158 (AVQLLLGSLIFFTLSPIQFYF), 162–182 (INFLVDLLYVSVLGGGISFYL), and 214–234 (GVNVNIGMIEGIGVMFLGILI).

Belongs to the EamA transporter family.

Its subcellular location is the cell membrane. This is an uncharacterized protein from Acidianus ambivalens (Desulfurolobus ambivalens).